Consider the following 539-residue polypeptide: MSVKGITPQELAAYGIHNVSEIVYNPSYDLLFEEETKPTLEGYERGTLTTTGAIAVDTGIFTGRSPKDKYIVRDAITQDTVWWADQGKGKNDNKPLSQEIWSHLKGLVTEQLSGKRLFVVDTFCGANADTRLQVRFITEVAWQAHFVKNMFIRPSDEELARFEPDFIVMNGAKCTNPQWKEQGLNSENFVAFNLTERMQLIGGTWYGGEMKKGMFSMMNYLLPLKGIASMHCSANVGEKGDVAIFFGLSGTGKTTLSTDPKRKLIGDDEHGWDDDGVFNFEGGCYAKTIKLSEEAEPDIYHAIKRDALLENVVVLADGTVDFNDGSKTENTRVSYPIYHIDNIVKPVSKAGHATKVIFLTADAFGVLPPVSRLTANQTQYHFLSGFTAKLAGTERGVTEPTPTFSACFGAAFLSLHPTQYAEVLVKRMQAVGAQAYLVNTGWNGTGKRISIKDTRAIIDAILNGEIDKAETFTLPIFDLAVPMALPGVNPDILDPRDTYADKAQWQEKAEDLAKRFATNFDKYTDTPAGAALVSAGPKI.

The substrate site is built by Arg-64, Tyr-206, and Lys-212. Residues Lys-212, His-231, and 247–255 contribute to the ATP site; that span reads GLSGTGKTT. Residues Lys-212 and His-231 each coordinate Mn(2+). Asp-268 contacts Mn(2+). Residues Glu-296, Arg-332, 448-449, and Thr-454 contribute to the ATP site; that span reads RI. Arg-332 serves as a coordination point for substrate.

It belongs to the phosphoenolpyruvate carboxykinase (ATP) family. As to quaternary structure, monomer. Mn(2+) serves as cofactor.

The protein localises to the cytoplasm. It catalyses the reaction oxaloacetate + ATP = phosphoenolpyruvate + ADP + CO2. The protein operates within carbohydrate biosynthesis; gluconeogenesis. In terms of biological role, involved in the gluconeogenesis. Catalyzes the conversion of oxaloacetate (OAA) to phosphoenolpyruvate (PEP) through direct phosphoryl transfer between the nucleoside triphosphate and OAA. This is Phosphoenolpyruvate carboxykinase (ATP) from Yersinia pseudotuberculosis serotype IB (strain PB1/+).